The sequence spans 624 residues: RQC trigger complex subunit CUE3 (624 aa).

A CUE domain is found at 316–359 (VNEEQLSALMELFPQFSKYQLSQTLLAYDNNIELVTNKIFEDPT). Disordered regions lie at residues 366–390 (REPA…ELSI), 435–469 (RDDT…DDSN), and 546–624 (SKTG…NNAI). At serine 377 the chain carries Phosphoserine. Basic and acidic residues-rich tracts occupy residues 443-455 (DVNR…RIGL) and 568-589 (EQAK…TEQK). Basic residues predominate over residues 590–617 (KRQHAKNEKRKGARANHNRKKGHDKKLA).

As to quaternary structure, component of the RQT (ribosome quality control trigger) complex, composed of SLH1, CUE3, and RQT4. Interacts with ubiquitin; the interaction is direct. Interacts with SLH1. Interacts with RQT4. Interacts with HEL2. Associates with translating ribosomes.

The protein localises to the cytoplasm. Functionally, involved in activation of the ribosome quality control (RQC) pathway, a pathway that degrades nascent peptide chains during problematic translation. Specifically recognizes and binds RPS20/uS10 ubiquitinated by HEL2, promoting recruitment of the RQT (ribosome quality control trigger) complex on stalled ribosomes, followed by disassembly of stalled ribosomes. The protein is RQC trigger complex subunit CUE3 (CUE3) of Saccharomyces cerevisiae (strain ATCC 204508 / S288c) (Baker's yeast).